The following is a 700-amino-acid chain: MAQDVLTDLTKVRNIGIMAHIDAGKTTTTERILFYTGISYKIGEVHDGAATMDWMEQEQERGITITSAATTCFWNDNQINIIDTPGHVDFTVEVERSLRVLDGAVAVFDGKEGVEPQSEQVWRQADKYDVPRICFVNKMDKLGADFYFSVQTMKDRLGANVVPIQLPIGSEGDFEGVVDLVEMKAKVWRGETKLGEKYDTVEIPADLQEKAEEYRTAMIEAVAETDDELMEKYLGGEELTIEEIKSGLRKLTITSAGYPVLCGSAFKNKGVQPMLDAVIDYLPNPLDVPAAEGHVPGKEDEIISRKPSADEPFSGLAFKVATHPFFGKLTYVRVYSGKVDSGSQVVNSTKGKKERLGKLFQMHSNKENPVESASAGHIYAVIGLKDTTTGDTLCDPNQQIVLESMTFPDPVIEVAIEPKTKSDQEKLGTAIQKLAEEDPTFKVHLDQETGQTVIGGMGELHLDILVDRMRREFKVEANVGKPQVAYRETIRRKVEKVEYTHKKQTGGSGQFAKVLIDLEPFTGEDGATYEFENKVTGGRIPREYIPSVDAGAQDAMQYGVLAGYPLVNVKVTLLDGAFHEVDSSEMAFKVAGSQVLKKAAQSAQPVILEPIMAVEVTTPEDYMGDVIGDLNSRRGQIQAMEERSGARVVKAQVPLSEMFGYVGDLRSKTQGRANYSMVFDSYAEVPANVSKEIIAKATGQ.

One can recognise a tr-type G domain in the interval 10–286 (TKVRNIGIMA…AVIDYLPNPL (277 aa)). GTP contacts are provided by residues 19-26 (AHIDAGKT), 83-87 (DTPGH), and 137-140 (NKMD).

The protein belongs to the TRAFAC class translation factor GTPase superfamily. Classic translation factor GTPase family. EF-G/EF-2 subfamily.

The protein resides in the cytoplasm. In terms of biological role, catalyzes the GTP-dependent ribosomal translocation step during translation elongation. During this step, the ribosome changes from the pre-translocational (PRE) to the post-translocational (POST) state as the newly formed A-site-bound peptidyl-tRNA and P-site-bound deacylated tRNA move to the P and E sites, respectively. Catalyzes the coordinated movement of the two tRNA molecules, the mRNA and conformational changes in the ribosome. In Mycolicibacterium vanbaalenii (strain DSM 7251 / JCM 13017 / BCRC 16820 / KCTC 9966 / NRRL B-24157 / PYR-1) (Mycobacterium vanbaalenii), this protein is Elongation factor G.